The primary structure comprises 592 residues: Arginine--tRNA ligase (592 aa).

A 'HIGH' region motif is present at residues 128–138; that stretch reads ANPTGPLHVGH.

The protein belongs to the class-I aminoacyl-tRNA synthetase family. In terms of assembly, monomer.

It is found in the cytoplasm. The catalysed reaction is tRNA(Arg) + L-arginine + ATP = L-arginyl-tRNA(Arg) + AMP + diphosphate. The chain is Arginine--tRNA ligase from Hydrogenovibrio crunogenus (strain DSM 25203 / XCL-2) (Thiomicrospira crunogena).